Consider the following 573-residue polypeptide: SHC-transforming protein 2 (573 aa).

One can recognise a PID domain in the interval 125 to 309; that stretch reads LGPGVSYIVR…LEELAWGDDD (185 aa). The interval 310-477 is CH1; the sequence is AAADHNYYNS…PTEEQLRQEP (168 aa). Y316, Y317, and Y395 each carry phosphotyrosine. Positions 478-569 constitute an SH2 domain; sequence WYHGRMSRRA…ESELHLRGVV (92 aa).

In terms of assembly, interacts with the Trk receptors in a phosphotyrosine-dependent manner and MEGF12. Once activated, binds to GRB2. Phosphorylated on tyrosine by the Trk receptors. As to expression, expressed in brain. Expressed at high level in the hypothalamus and at low level in the caudate nucleus.

Functionally, signaling adapter that couples activated growth factor receptors to signaling pathway in neurons. Involved in the signal transduction pathways of neurotrophin-activated Trk receptors in cortical neurons. The protein is SHC-transforming protein 2 (Shc2) of Mus musculus (Mouse).